The sequence spans 283 residues: Digeranylgeranylglyceryl phosphate synthase (283 aa).

The next 8 membrane-spanning stretches (helical) occupy residues 5-27, 37-57, 85-105, 128-148, 152-172, 203-223, 228-248, and 263-283; these read VEIIRPGNVIMAIIAVILVAILA, AMLAVFFAMSAGNVINDYFDY, LLFILAAIVGFLISCLVDTWI, PLIGNLTVGFMTGLCFIFAGY, EGLIIYESYLLAFFALIMTTA, AIIAISLIIIDCALCPLLYIY, INYLIVVSIAVLIFLYGAVLL, and LKTGMLIAFIAFAIGTFTITF.

Belongs to the UbiA prenyltransferase family. DGGGP synthase subfamily. The cofactor is Mg(2+).

It is found in the cell membrane. The catalysed reaction is sn-3-O-(geranylgeranyl)glycerol 1-phosphate + (2E,6E,10E)-geranylgeranyl diphosphate = 2,3-bis-O-(geranylgeranyl)-sn-glycerol 1-phosphate + diphosphate. It participates in membrane lipid metabolism; glycerophospholipid metabolism. In terms of biological role, prenyltransferase that catalyzes the transfer of the geranylgeranyl moiety of geranylgeranyl diphosphate (GGPP) to the C2 hydroxyl of (S)-3-O-geranylgeranylglyceryl phosphate (GGGP). This reaction is the second ether-bond-formation step in the biosynthesis of archaeal membrane lipids. This is Digeranylgeranylglyceryl phosphate synthase from Methanobrevibacter smithii (strain ATCC 35061 / DSM 861 / OCM 144 / PS).